A 61-amino-acid polypeptide reads, in one-letter code: Sperm protamine P1 (61 aa).

The segment at 1–61 (MARYRHSRSR…RRYSRRRRRY (61 aa)) is disordered.

This sequence belongs to the protamine P1 family. Testis.

Its subcellular location is the nucleus. The protein localises to the chromosome. In terms of biological role, protamines substitute for histones in the chromatin of sperm during the haploid phase of spermatogenesis. They compact sperm DNA into a highly condensed, stable and inactive complex. In Macropus giganteus (Eastern gray kangaroo), this protein is Sperm protamine P1 (PRM1).